The primary structure comprises 146 residues: Lysozyme-like protein 4 (146 aa).

The first 19 residues, 1–19 (MKASVVLSLLGYLVVPSGA), serve as a signal peptide directing secretion. The 127-residue stretch at 20-146 (YILGRCTVAK…LARWLDGCKL (127 aa)) folds into the C-type lysozyme domain. Intrachain disulfides connect C25–C144, C49–C131, C84–C96, and C92–C110. Residue E54 is part of the active site.

It belongs to the glycosyl hydrolase 22 family. Monomer. Expressed in testis and epididymis.

Its subcellular location is the secreted. It localises to the cytoplasmic vesicle. It is found in the secretory vesicle. The protein resides in the acrosome. The protein localises to the cell projection. Its subcellular location is the cilium. It localises to the flagellum. Its function is as follows. May be involved in fertilization. Has no detectable bacteriolytic and lysozyme activities in vitro. The polypeptide is Lysozyme-like protein 4 (LYZL4) (Homo sapiens (Human)).